A 283-amino-acid polypeptide reads, in one-letter code: Probable endonuclease 4 (283 aa).

Zn(2+)-binding residues include His69, His113, Glu148, Asp182, His185, His217, Asp230, His232, and Glu262.

The protein belongs to the AP endonuclease 2 family. Zn(2+) serves as cofactor.

The enzyme catalyses Endonucleolytic cleavage to 5'-phosphooligonucleotide end-products.. Functionally, endonuclease IV plays a role in DNA repair. It cleaves phosphodiester bonds at apurinic or apyrimidinic (AP) sites, generating a 3'-hydroxyl group and a 5'-terminal sugar phosphate. The polypeptide is Probable endonuclease 4 (Bifidobacterium longum (strain DJO10A)).